The sequence spans 92 residues: Small ribosomal subunit protein uS19c (92 aa).

It belongs to the universal ribosomal protein uS19 family.

The protein localises to the plastid. It is found in the chloroplast. Protein S19 forms a complex with S13 that binds strongly to the 16S ribosomal RNA. The protein is Small ribosomal subunit protein uS19c (rps19) of Marchantia polymorpha (Common liverwort).